Here is a 295-residue protein sequence, read N- to C-terminus: MTSTDSSQATSDRYVVIGNPVAHSRSPAIHAAFARQTGEAVQYDRLEAPLDGFADAVRQFFAEGGYGCNVTVPFKLEAYDLADRLTERAEAAGAVNTLWIEEGLIHGDNTDGIGLVRDIQDNLDTLIEGKRVLLLGAGGAAMGAMLPLIECRPSRIVVANRTASRASDMLEEFVEAADQYGVELWGGGLDALDGLSEDEAVDVVINASSSSLHGEVPPVPEFLLGEGVLAYDMMYGAEPTVFLQFAARCGARTSDGLGMLVEQAAEAFYIWRGVRPRTAPVLAELRAALQAERKG.

Residues 24-26 (SRS) and Thr-71 each bind shikimate. Lys-75 acts as the Proton acceptor in catalysis. Position 87 (Glu-87) interacts with NADP(+). The shikimate site is built by Asn-96 and Asp-111. Residues 136–140 (GAGGA), 160–165 (NRTASR), and Met-233 contribute to the NADP(+) site. Shikimate is bound at residue Tyr-235. An NADP(+)-binding site is contributed by Gly-256.

This sequence belongs to the shikimate dehydrogenase family. Homodimer.

The catalysed reaction is shikimate + NADP(+) = 3-dehydroshikimate + NADPH + H(+). It participates in metabolic intermediate biosynthesis; chorismate biosynthesis; chorismate from D-erythrose 4-phosphate and phosphoenolpyruvate: step 4/7. In terms of biological role, involved in the biosynthesis of the chorismate, which leads to the biosynthesis of aromatic amino acids. Catalyzes the reversible NADPH linked reduction of 3-dehydroshikimate (DHSA) to yield shikimate (SA). The chain is Shikimate dehydrogenase (NADP(+)) from Cupriavidus necator (strain ATCC 17699 / DSM 428 / KCTC 22496 / NCIMB 10442 / H16 / Stanier 337) (Ralstonia eutropha).